The sequence spans 210 residues: Putative protein-lysine deacylase ABHD14B (210 aa).

Ala-2 carries the N-acetylalanine modification. Ser-91 bears the Phosphoserine mark. Catalysis depends on charge relay system residues Ser-111, Asp-162, and His-188.

The protein belongs to the AB hydrolase superfamily. ABHD14 family. May interact with TAF1. In terms of tissue distribution, ubiquitous. Detected in spleen, thymus, prostate, testis, ovary, small intestine, colon, peripheral blood leukocyte, heart, placenta, lung, liver, skeletal muscle, pancreas and kidney.

Its subcellular location is the cytoplasm. It localises to the nucleus. It catalyses the reaction L-lysyl-[protein] + acetyl-CoA = N(6)-acetyl-L-lysyl-[protein] + CoA + H(+). Acts as an atypical protein-lysine deacetylase in vitro. Catalyzes the deacetylation of lysine residues using CoA as substrate, generating acetyl-CoA and the free amine of protein-lysine residues. Additional experiments are however required to confirm the protein-lysine deacetylase activity in vivo. Has hydrolase activity towards various surrogate p-nitrophenyl (pNp) substrates, such as pNp-butyrate, pNp-acetate and pNp-octanoate in vitro, with a strong preference for pNp-acetate. May activate transcription. The protein is Putative protein-lysine deacylase ABHD14B of Homo sapiens (Human).